Here is a 130-residue protein sequence, read N- to C-terminus: YopE regulator (130 aa).

In terms of biological role, positive regulator of YopE. This chain is YopE regulator (yerA), found in Yersinia pestis.